We begin with the raw amino-acid sequence, 950 residues long: ABC transporter A family member 9 (950 aa).

6 helical membrane-spanning segments follow: residues 31–51, 223–243, 276–296, 308–328, 342–362, and 426–446; these read ATCL…SIEE, IISA…MFGF, WLIW…LFGM, FVLV…LAFA, VGFL…AGFP, and IWLV…DNII. One can recognise an ABC transporter domain in the interval 520-765; it reads VQIHGLAKTY…FGTGFVATVS (246 aa). 566–573 is a binding site for ATP; that stretch reads GPNGAGKT.

Belongs to the ABC transporter superfamily. ABCA family. CPR flippase (TC 3.A.1.211) subfamily. Highly expressed in siliques. Detected in seedlings, rosette leaves, stems and flowers.

The protein localises to the endoplasmic reticulum membrane. In terms of biological role, mediates the transport of acyl-CoAs and/or free fatty acids to the endoplasmic reticulum. Has no effect on the selectivity of fatty acid incorporation into triacylglycerol or further desaturation steps. The polypeptide is ABC transporter A family member 9 (ABCA9) (Arabidopsis thaliana (Mouse-ear cress)).